Consider the following 563-residue polypeptide: MVSKTFFLAAALNVVGTLAQAPTAVLNGNEVISGVLEGKVDTFKGIPFADPPVGDLRFKHPQPFTGSYQGLKANDFSSACMQLDPGNAISLLDKVVGLGKIIPDNLRGPLYDMAQGSVSMNEDCLYLNVFRPAGTKPDAKLPVMVWIYGGAFVFGSSASYPGNGYVKESVEMGQPVVFVSINYRTGPYGFLGGDAITAEGNTNAGLHDQRKGLEWVSDNIANFGGDPDKVMIFGESAGAMSVAHQLVAYGGDNTYNGKQLFHSAILQSGGPLPYFDSTSVGPESAYSRFAQYAGCDASAGDNETLACLRSKSSDVLHSAQNSYDLKDLFGLLPQFLGFGPRPDGNIIPDAAYELYRSGRYAKVPYITGNQEDEGTILAPVAINATTTPHVKKWLKYICSEASDASLDRVLSLYPGSWSEGAPFRTGILNALTPQFKRIAAIFTDLLFQSPRRVMLNATKDVNRWTYLATQLHNLVPFLGTFHGSDLLFQYYVDLGPSSAYRRYFISFANHHDPNVGTNLKQWDMYTDSGKEMLQIHMIGNSMRTDDFRIEGISNFESDVTLFG.

The N-terminal stretch at 1-19 (MVSKTFFLAAALNVVGTLA) is a signal peptide. Pyrrolidone carboxylic acid is present on Gln20. Residues Cys80 and Cys124 are joined by a disulfide bond. The active-site Acyl-ester intermediate is the Ser236. A disulfide bridge links Cys295 with Cys307. N-linked (GlcNAc...) asparagine glycosylation is present at Asn302. Catalysis depends on Glu373, which acts as the Charge relay system. N-linked (GlcNAc...) asparagine glycosylation occurs at Asn383. His482 serves as the catalytic Charge relay system.

It belongs to the type-B carboxylesterase/lipase family. As to quaternary structure, monomer.

It is found in the secreted. It catalyses the reaction a triacylglycerol + H2O = a diacylglycerol + a fatty acid + H(+). Functionally, hydrolyzes all ester bonds in triglyceride and displays a high affinity for triolein. For unsaturated substrates having long fatty acyl chains (C18:2 cis-9, cis-12 and C18:3 cis-9, cis-12, cis-15) GCL I shows higher specific activity than GCL II, whereas GCL II shows higher specific activity against saturated substrates having short fatty acid chains (C8, C10, C12 and C14). In Geotrichum candidum (Oospora lactis), this protein is Lipase 1 (LIP1).